Here is a 341-residue protein sequence, read N- to C-terminus: Inositol 2-dehydrogenase (341 aa).

The protein belongs to the Gfo/Idh/MocA family. As to quaternary structure, homotetramer.

It carries out the reaction myo-inositol + NAD(+) = scyllo-inosose + NADH + H(+). In terms of biological role, involved in the oxidation of myo-inositol (MI) to 2-keto-myo-inositol (2KMI or 2-inosose). The sequence is that of Inositol 2-dehydrogenase from Acidothermus cellulolyticus (strain ATCC 43068 / DSM 8971 / 11B).